A 121-amino-acid chain; its full sequence is Ribonuclease P protein component (121 aa).

It belongs to the RnpA family. As to quaternary structure, consists of a catalytic RNA component (M1 or rnpB) and a protein subunit.

The catalysed reaction is Endonucleolytic cleavage of RNA, removing 5'-extranucleotides from tRNA precursor.. In terms of biological role, RNaseP catalyzes the removal of the 5'-leader sequence from pre-tRNA to produce the mature 5'-terminus. It can also cleave other RNA substrates such as 4.5S RNA. The protein component plays an auxiliary but essential role in vivo by binding to the 5'-leader sequence and broadening the substrate specificity of the ribozyme. This is Ribonuclease P protein component from Lactobacillus delbrueckii subsp. bulgaricus (strain ATCC 11842 / DSM 20081 / BCRC 10696 / JCM 1002 / NBRC 13953 / NCIMB 11778 / NCTC 12712 / WDCM 00102 / Lb 14).